We begin with the raw amino-acid sequence, 297 residues long: Large ribosomal subunit protein uL18 (297 aa).

Glycine 2 bears the N-acetylglycine mark. An N6-acetyllysine mark is found at lysine 5 and lysine 48. Phosphoserine is present on serine 185. N6-acetyllysine; alternate is present on lysine 220. A Glycyl lysine isopeptide (Lys-Gly) (interchain with G-Cter in SUMO1); alternate cross-link involves residue lysine 220. Lysine 220 is covalently cross-linked (Glycyl lysine isopeptide (Lys-Gly) (interchain with G-Cter in SUMO2); alternate). At threonine 232 the chain carries Phosphothreonine. Positions 253–297 (YEKKPKKEVKKKRWNRPKMSLAQKKDRVAQKKASFLRAQERAAES) are disordered. The segment covering 258–268 (KKEVKKKRWNR) has biased composition (basic residues). Serine 272 carries the phosphoserine modification.

Belongs to the universal ribosomal protein uL18 family. Component of the large ribosomal subunit (LSU). Part of the 5S RNP complex, which is a LSU subcomplex composed of the 5S RNA, RPL5 and RPL11. Component of a hexameric 5S RNP precursor complex, composed of 5S RNA, RRS1, RPF2/BXDC1, RPL5, RPL11 and HEATR3; this complex acts as a precursor for ribosome assembly. Interacts with isoform 1 of NVL in an ATP-dependent manner. Interacts with RRP1B. Interacts with IPO5, IPO7 and KPNB1; these interactions may be involved in RPL5 nuclear import for the assembly of ribosomal subunits.

Its subcellular location is the cytoplasm. The protein resides in the nucleus. It is found in the nucleolus. Functionally, component of the ribosome, a large ribonucleoprotein complex responsible for the synthesis of proteins in the cell. The small ribosomal subunit (SSU) binds messenger RNAs (mRNAs) and translates the encoded message by selecting cognate aminoacyl-transfer RNA (tRNA) molecules. The large subunit (LSU) contains the ribosomal catalytic site termed the peptidyl transferase center (PTC), which catalyzes the formation of peptide bonds, thereby polymerizing the amino acids delivered by tRNAs into a polypeptide chain. The nascent polypeptides leave the ribosome through a tunnel in the LSU and interact with protein factors that function in enzymatic processing, targeting, and the membrane insertion of nascent chains at the exit of the ribosomal tunnel. As part of the 5S RNP/5S ribonucleoprotein particle it is an essential component of the LSU, required for its formation and the maturation of rRNAs. It also couples ribosome biogenesis to p53/TP53 activation. As part of the 5S RNP it accumulates in the nucleoplasm and inhibits MDM2, when ribosome biogenesis is perturbed, mediating the stabilization and the activation of TP53. The sequence is that of Large ribosomal subunit protein uL18 (RPL5) from Homo sapiens (Human).